The primary structure comprises 525 residues: GMP synthase [glutamine-hydrolyzing] (525 aa).

A Glutamine amidotransferase type-1 domain is found at 9–207 (RILILDFGSQ…VLEISGCEAL (199 aa)). Cys-86 functions as the Nucleophile in the catalytic mechanism. Catalysis depends on residues His-181 and Glu-183. In terms of domain architecture, GMPS ATP-PPase spans 208–400 (WTPANIVEDA…LGLPYDMVYR (193 aa)). Residue 235–241 (SGGVDSS) participates in ATP binding.

Homodimer.

The enzyme catalyses XMP + L-glutamine + ATP + H2O = GMP + L-glutamate + AMP + diphosphate + 2 H(+). Its pathway is purine metabolism; GMP biosynthesis; GMP from XMP (L-Gln route): step 1/1. In terms of biological role, catalyzes the synthesis of GMP from XMP. The polypeptide is GMP synthase [glutamine-hydrolyzing] (Ectopseudomonas mendocina (strain ymp) (Pseudomonas mendocina)).